Here is a 301-residue protein sequence, read N- to C-terminus: Recombination-associated protein RdgC (301 aa).

Belongs to the RdgC family.

The protein localises to the cytoplasm. Its subcellular location is the nucleoid. May be involved in recombination. The protein is Recombination-associated protein RdgC of Xanthomonas oryzae pv. oryzae (strain KACC10331 / KXO85).